The primary structure comprises 1321 residues: Bile salt export pump (1321 aa).

Residues 1-62 (MSDSVILRSV…FSSWTDIWLM (62 aa)) are Cytoplasmic-facing. The region spanning 62-385 (MCMGSLCACI…ASPCLEAFAA (324 aa)) is the ABC transmembrane type-1 1 domain. The helical transmembrane segment at 63-83 (CMGSLCACIHGIAQPGVLLIF) threads the bilayer. The Extracellular segment spans residues 84 to 147 (GTMTDVFIDY…MIRFAGYYAG (64 aa)). N-linked (GlcNAc...) asparagine glycans are attached at residues Asn109, Asn116, Asn122, and Asn125. Residues 148–168 (IGIAVLTTGYIQICFWGIAAA) traverse the membrane as a helical segment. The Cytoplasmic portion of the chain corresponds to 169–215 (HQIQKMRKSYFRKIMRMGIGWVDCNSVGKLNTPFSVDFNKINDSSAD). A helical transmembrane segment spans residues 216–236 (QLAIFIQGMTSPIFGFLVGFS). Over 237 to 240 (QWWK) the chain is Extracellular. Residues 241–261 (LTLVIISVSPLIGLGAAIIGL) form a helical membrane-spanning segment. The Cytoplasmic portion of the chain corresponds to 262 to 319 (SVSKFTDYELKAYAKAGSVADEVISSMRTVAAFGGEKKEVERYEKNLVFAQRWGIRKG). Residues 320 to 340 (IVMGFFTGYMWCLIFFCYALA) form a helical membrane-spanning segment. Residues 341-353 (FWYGSKLVLEEGE) lie on the Extracellular side of the membrane. Residues 354–374 (YSPGALVQIFLSVIIGALNLG) traverse the membrane as a helical segment. Over 375 to 755 (NASPCLEAFA…KLNAPEWPYM (381 aa)) the chain is Cytoplasmic. The region spanning 420 to 656 (IEFHNVTFHY…KGVYFALVTL (237 aa)) is the ABC transporter 1 domain. Position 455-462 (455-462 (GPSGAGKS)) interacts with ATP. Residue Thr586 is modified to Phosphothreonine. The residue at position 587 (Ser587) is a Phosphoserine. The interval 651 to 672 (FALVTLQSQRNQGDQEENEKDA) is interaction with HAX1. The segment at 659-735 (QRNQGDQEEN…KDKDLPAQED (77 aa)) is disordered. Acidic residues predominate over residues 664 to 677 (DQEENEKDATEDDI). 3 positions are modified to phosphoserine: Ser690, Ser701, and Ser704. Residues 714–731 (VEDHKSTHEEDRKDKDLP) show a composition bias toward basic and acidic residues. The ABC transmembrane type-1 2 domain maps to 755-1043 (MLLGSMGAAV…ASSYTPSYAK (289 aa)). A helical membrane pass occupies residues 756-776 (LLGSMGAAVNGAVTPLYAFLF). The Extracellular portion of the chain corresponds to 777-794 (SQILGTFSLPDKEEQRSQ). A helical transmembrane segment spans residues 795–815 (INGICLLFVTLGCVSFFTQFL). Over 816–869 (QGYTFAKSGELLTKRLRKFGFRAMLGQDIGWFDDLRNSPGALTTRLATDASQVQ) the chain is Cytoplasmic. 2 helical membrane passes run 870 to 890 (GATG…TVAM) and 891 to 911 (IIAF…FPFL). Over 912–979 (ALSGALQTKM…PYKMAIKKAN (68 aa)) the chain is Cytoplasmic. Residues 980–1000 (VYGLCFGFSQCITFIANSASY) traverse the membrane as a helical segment. The Extracellular segment spans residues 1001–1011 (RYGGYLISNEG). The chain crosses the membrane as a helical span at residues 1012 to 1032 (LHFSYVFRVISAVVLSATALG). The Cytoplasmic segment spans residues 1033-1321 (RASSYTPSYA…KLVTTGSPIS (289 aa)). One can recognise an ABC transporter 2 domain in the interval 1078 to 1316 (IDFVDCKFTY…KGAYYKLVTT (239 aa)). 1113–1120 (GSSGCGKS) provides a ligand contact to ATP. Phosphoserine is present on residues Ser1214 and Ser1321.

The protein belongs to the ABC transporter superfamily. ABCB family. Multidrug resistance exporter (TC 3.A.1.201) subfamily. In terms of assembly, interacts with HAX1. Interacts with the adapter protein complex 2 (AP-2) throught AP2A2 or AP2A1; this interaction regulates cell membrane expression of ABCB11 through its internalization in a clathrin-dependent manner and its subsequent degradation. Post-translationally, N-glycosylated. Ubiquitinated; short-chain ubiquitination regulates cell-Surface expression of ABCB11. As to expression, expressed predominantly, if not exclusively in the liver, where it was further localized to the canalicular microvilli and to subcanalicular vesicles of the hepatocytes by in situ.

It localises to the apical cell membrane. The protein localises to the recycling endosome membrane. Its subcellular location is the endosome. It is found in the cell membrane. It catalyses the reaction cholate(in) + ATP + H2O = cholate(out) + ADP + phosphate + H(+). It carries out the reaction taurocholate(in) + ATP + H2O = taurocholate(out) + ADP + phosphate + H(+). The catalysed reaction is glycocholate(in) + ATP + H2O = glycocholate(out) + ADP + phosphate + H(+). The enzyme catalyses glycochenodeoxycholate(in) + ATP + H2O = glycochenodeoxycholate(out) + ADP + phosphate + H(+). It catalyses the reaction taurochenodeoxycholate(in) + ATP + H2O = taurochenodeoxycholate(out) + ADP + phosphate + H(+). It carries out the reaction glycoursodeoxycholate(in) + ATP + H2O = glycoursodeoxycholate(out) + ADP + phosphate + H(+). The catalysed reaction is tauroursodeoxycholate(in) + ATP + H2O = tauroursodeoxycholate(out) + ADP + phosphate + H(+). The enzyme catalyses taurodeoxycholate(in) + ATP + H2O = taurodeoxycholate(out) + ADP + phosphate + H(+). It catalyses the reaction taurolithocholate 3-sulfate(in) + ATP + H2O = taurolithocholate 3-sulfate(out) + ADP + phosphate + H(+). It carries out the reaction pravastatin(in) + ATP + H2O = pravastatin(out) + ADP + phosphate + H(+). With respect to regulation, the uptake of taurocholate is inhibited by taurolithocholate sulfate with an IC(50) of 9 uM. Pravastatin competitively inhibits the transport of taurocholic acid. Cyclosporin A, glibenclamide, rifampicin and troglitazonestrongly competitively inhibit the transport activity of taurocholate. The canalicular transport activity of taurocholate is strongly dependent on canalicular membrane cholesterol content. The uptake of taurocholate is increased by short- and medium-chain fatty acids. Cholesterol increases transport capacity of taurocholate without affecting the affinity for the substrate. In terms of biological role, catalyzes the transport of the major hydrophobic bile salts, such as taurine and glycine-conjugated cholic acid across the canalicular membrane of hepatocytes in an ATP-dependent manner, therefore participates in hepatic bile acid homeostasis and consequently to lipid homeostasis through regulation of biliary lipid secretion in a bile salts dependent manner. Transports taurine-conjugated bile salts more rapidly than glycine-conjugated bile salts. Also transports non-bile acid compounds, such as pravastatin and fexofenadine in an ATP-dependent manner and may be involved in their biliary excretion. This is Bile salt export pump from Oryctolagus cuniculus (Rabbit).